A 417-amino-acid polypeptide reads, in one-letter code: Phosphoglycerate kinase 2 (417 aa).

An N-acetylserine modification is found at Ser-2. 2 positions are modified to phosphoserine: Ser-2 and Ser-4. Residue Lys-11 is modified to N6-acetyllysine. (2R)-3-phosphoglycerate contacts are provided by Val-23, Asp-24, Phe-25, Asn-26, Gln-38, Arg-39, Ser-62, His-63, Gly-65, and Arg-66. N6-acetyllysine is present on residues Lys-75, Lys-86, and Lys-97. Leu-122 and Arg-123 together coordinate (2R)-3-phosphoglycerate. An N6-acetyllysine mark is found at Lys-131 and Lys-146. Residues His-170 and Arg-171 each contribute to the (2R)-3-phosphoglycerate site. At Tyr-196 the chain carries Phosphotyrosine. Lys-199 bears the N6-acetyllysine mark. Gly-214 provides a ligand contact to ADP. Gly-214 lines the CDP pocket. The AMP site is built by Ala-215 and Lys-216. An ATP-binding site is contributed by Ala-215. Ala-215 lines the Mg(2+) pocket. 2 residues coordinate Mg(2+): Ala-218 and Asp-219. CDP is bound at residue Asp-219. An AMP-binding site is contributed by Lys-220. An ATP-binding site is contributed by Lys-220. Gly-238 contacts ADP. Gly-238 contributes to the CDP binding site. Gly-239 contacts AMP. Gly-239 contacts ATP. An N6-acetyllysine mark is found at Lys-267 and Lys-291. An AMP-binding site is contributed by Ala-313. ATP is bound at residue Ala-313. CDP is bound by residues Gly-338 and Phe-343. Phe-343 is a binding site for ADP. Glu-344 provides a ligand contact to AMP. ATP-binding residues include Glu-344, Asp-375, and Thr-376. Asp-375 serves as a coordination point for Mg(2+).

It belongs to the phosphoglycerate kinase family. Monomer. It depends on Mg(2+) as a cofactor. Testis specific.

Its subcellular location is the cytoplasm. The enzyme catalyses (2R)-3-phosphoglycerate + ATP = (2R)-3-phospho-glyceroyl phosphate + ADP. The protein operates within carbohydrate degradation; glycolysis; pyruvate from D-glyceraldehyde 3-phosphate: step 2/5. Its function is as follows. Essential for sperm motility and male fertility but is not required for the completion of spermatogenesis. The protein is Phosphoglycerate kinase 2 of Sus scrofa (Pig).